A 366-amino-acid chain; its full sequence is Chorismate synthase (366 aa).

Residues arginine 48 and arginine 54 each contribute to the NADP(+) site. Residues 125–127 (RSS), 238–239 (NA), glycine 278, 293–297 (KPTSS), and arginine 319 contribute to the FMN site.

It belongs to the chorismate synthase family. In terms of assembly, homotetramer. FMNH2 serves as cofactor.

The catalysed reaction is 5-O-(1-carboxyvinyl)-3-phosphoshikimate = chorismate + phosphate. Its pathway is metabolic intermediate biosynthesis; chorismate biosynthesis; chorismate from D-erythrose 4-phosphate and phosphoenolpyruvate: step 7/7. Its function is as follows. Catalyzes the anti-1,4-elimination of the C-3 phosphate and the C-6 proR hydrogen from 5-enolpyruvylshikimate-3-phosphate (EPSP) to yield chorismate, which is the branch point compound that serves as the starting substrate for the three terminal pathways of aromatic amino acid biosynthesis. This reaction introduces a second double bond into the aromatic ring system. The sequence is that of Chorismate synthase from Neisseria gonorrhoeae (strain NCCP11945).